Reading from the N-terminus, the 345-residue chain is MSSYQKELEKYRDIDEDEILKTLSPEELEQLDCELQEMDPENMLLPAGLRQRDQTKKSPTGPLDREALLQYLEQQALEVKERDDLVPFTGEKKGKPYIQPKREIPVEEQVTLEPELEEALAHATDAEMCDIAAILGMYTLMSNKQYYDAICSGEICNTEGISSVVQPDKYKPVPDEPPNPTNIEEILKSVRSNDKEVEEVNLNNIQDIPIPMLTELCEAMKTNTHVRSFSLVATRSGDPVANAVADMLRENRSLQSLNIESNFISSTGLMAVLKAVRENATLTELRVDNQRQWPGDAVEMEMATVLEQCPSIVRFGYHFTQQGPRARAAQAMTRNNELRRQQKKR.

The segment at 42 to 63 is disordered; that stretch reads NMLLPAGLRQRDQTKKSPTGPL.

Belongs to the tropomodulin family. In terms of assembly, binds to the N-terminus of tropomyosin and to actin.

It is found in the cytoplasm. The protein resides in the cytoskeleton. Its function is as follows. Blocks the elongation and depolymerization of the actin filaments at the pointed end. The Tmod/TM complex contributes to the formation of the short actin protofilament, which in turn defines the geometry of the membrane skeleton. The chain is Tropomodulin-4 (TMOD4) from Bos taurus (Bovine).